Reading from the N-terminus, the 466-residue chain is RuvB-like helicase 2 (466 aa).

74-81 (GPPSTGKT) is an ATP binding site.

It belongs to the RuvB family. May form heterododecamers with RVB1. Component of the SWR1 chromatin remodeling complex, the INO80 chromatin remodeling complex, and of the R2TP complex.

It localises to the nucleus. It catalyses the reaction ATP + H2O = ADP + phosphate + H(+). DNA helicase which participates in several chromatin remodeling complexes, including the SWR1 and the INO80 complexes. The SWR1 complex mediates the ATP-dependent exchange of histone H2A for the H2A variant HZT1 leading to transcriptional regulation of selected genes by chromatin remodeling. The INO80 complex remodels chromatin by shifting nucleosomes and is involved in DNA repair. Also involved in pre-rRNA processing. This chain is RuvB-like helicase 2 (RVB2), found in Yarrowia lipolytica (strain CLIB 122 / E 150) (Yeast).